A 202-amino-acid polypeptide reads, in one-letter code: 3-isopropylmalate dehydratase small subunit 1 (202 aa).

The protein belongs to the LeuD family. LeuD type 1 subfamily. Heterodimer of LeuC and LeuD.

The catalysed reaction is (2R,3S)-3-isopropylmalate = (2S)-2-isopropylmalate. The protein operates within amino-acid biosynthesis; L-leucine biosynthesis; L-leucine from 3-methyl-2-oxobutanoate: step 2/4. Its function is as follows. Catalyzes the isomerization between 2-isopropylmalate and 3-isopropylmalate, via the formation of 2-isopropylmaleate. This Mannheimia succiniciproducens (strain KCTC 0769BP / MBEL55E) protein is 3-isopropylmalate dehydratase small subunit 1.